The chain runs to 151 residues: Prolamin PPROL 14P (151 aa).

The N-terminal stretch at 1 to 19 (MKIIFVFALLAIAACSATA) is a signal peptide. At glutamine 20 the chain carries Pyrrolidone carboxylic acid.

The protein belongs to the prolamin family.

It localises to the vacuole. The protein localises to the aleurone grain. Its function is as follows. Seed storage protein; serves as a source of nitrogen, carbon and sulfur for the young developing seedling. The protein is Prolamin PPROL 14P (PROLM20) of Oryza sativa subsp. japonica (Rice).